A 152-amino-acid polypeptide reads, in one-letter code: FAD synthase (152 aa).

Residues 9–10, 14–17, and D92 contribute to the ATP site; these read TF and HPGH.

Belongs to the archaeal FAD synthase family. Homodimer. A divalent metal cation serves as cofactor.

It carries out the reaction FMN + ATP + H(+) = FAD + diphosphate. It functions in the pathway cofactor biosynthesis; FAD biosynthesis; FAD from FMN: step 1/1. Its function is as follows. Catalyzes the transfer of the AMP portion of ATP to flavin mononucleotide (FMN) to produce flavin adenine dinucleotide (FAD) coenzyme. The sequence is that of FAD synthase from Ferroglobus placidus (strain DSM 10642 / AEDII12DO).